A 423-amino-acid chain; its full sequence is COP9 signalosome complex subunit 3 (423 aa).

A2 is modified (N-acetylalanine). The PCI domain maps to 197 to 365 (NFERALYFYE…GMVSFHDNPE (169 aa)). The tract at residues 402–423 (QFVQKSMGSQEDDSGNKPSSYS) is disordered. Phosphoserine occurs at positions 407, 410, and 423.

This sequence belongs to the CSN3 family. As to quaternary structure, component of the CSN complex, composed of COPS1/GPS1, COPS2, COPS3, COPS4, COPS5, COPS6, COPS7 (COPS7A or COPS7B), COPS8 and COPS9 isoform 1. In the complex, it probably interacts directly with COPS1, COPS4, COPS8 and COPS9 isoform 1. Interacts with CK2 and PKD. Interacts with the translation initiation factor EIF3S6 and IKBKG. Interacts with ERCC6. In terms of tissue distribution, widely expressed. Expressed at high level in heart and skeletal muscle.

Its subcellular location is the cytoplasm. It localises to the nucleus. Its function is as follows. Component of the COP9 signalosome complex (CSN), a complex involved in various cellular and developmental processes. The CSN complex is an essential regulator of the ubiquitin (Ubl) conjugation pathway by mediating the deneddylation of the cullin subunits of SCF-type E3 ligase complexes, leading to decrease the Ubl ligase activity of SCF-type complexes such as SCF, CSA or DDB2. The complex is also involved in phosphorylation of p53/TP53, c-jun/JUN, IkappaBalpha/NFKBIA, ITPK1 and IRF8/ICSBP, possibly via its association with CK2 and PKD kinases. CSN-dependent phosphorylation of TP53 and JUN promotes and protects degradation by the Ubl system, respectively. This chain is COP9 signalosome complex subunit 3 (COPS3), found in Homo sapiens (Human).